Reading from the N-terminus, the 853-residue chain is Protein translocase subunit SecA (853 aa).

ATP-binding positions include Q77, 95-99, and D532; that span reads GEGKT.

Belongs to the SecA family. Monomer and homodimer. Part of the essential Sec protein translocation apparatus which comprises SecA, SecYEG and auxiliary proteins SecDF. Other proteins may also be involved.

The protein resides in the cell inner membrane. Its subcellular location is the cytoplasm. The enzyme catalyses ATP + H2O + cellular proteinSide 1 = ADP + phosphate + cellular proteinSide 2.. In terms of biological role, part of the Sec protein translocase complex. Interacts with the SecYEG preprotein conducting channel. Has a central role in coupling the hydrolysis of ATP to the transfer of proteins into and across the cell membrane, serving as an ATP-driven molecular motor driving the stepwise translocation of polypeptide chains across the membrane. This Thermosipho melanesiensis (strain DSM 12029 / CIP 104789 / BI429) protein is Protein translocase subunit SecA.